A 362-amino-acid polypeptide reads, in one-letter code: Adenosine kinase (362 aa).

At Ala2 the chain carries N-acetylalanine. The Nuclear localization signal motif lies at 8–16 (PKPKKLKVE). Adenosine is bound at residue Asp35. Residue Ser49 participates in Mg(2+) binding. Residue Tyr77 is modified to Phosphotyrosine. Positions 147 and 148 each coordinate Mg(2+). Residue Gln306 participates in adenosine binding. Asp317 (proton acceptor) is an active-site residue.

Belongs to the carbohydrate kinase PfkB family. As to quaternary structure, monomer. It depends on Mg(2+) as a cofactor. In terms of tissue distribution, widely expressed. Highest level in placenta, liver, muscle and kidney.

Its subcellular location is the nucleus. The protein resides in the cytoplasm. It carries out the reaction adenosine + ATP = AMP + ADP + H(+). It functions in the pathway purine metabolism; AMP biosynthesis via salvage pathway; AMP from adenosine: step 1/1. With respect to regulation, activity is inhibited by 5-iodotubercidin and 5'-amino-5'-deoxyadenosine. Catalyzes the phosphorylation of the purine nucleoside adenosine at the 5' position in an ATP-dependent manner. Serves as a potential regulator of concentrations of extracellular adenosine and intracellular adenine nucleotides. The chain is Adenosine kinase from Homo sapiens (Human).